The chain runs to 132 residues: uncharacterized protein (132 aa).

Its function is as follows. The presence of the two linear plasmids, termed pGKL1 and pGKL2, in strains of Kluyveromyces lactis confers the killer phenotype to the host cell, by promoting the secretion of a toxin able to inhibit the growth of sensitive strains. This is an uncharacterized protein from Kluyveromyces lactis (strain ATCC 8585 / CBS 2359 / DSM 70799 / NBRC 1267 / NRRL Y-1140 / WM37) (Yeast).